Consider the following 237-residue polypeptide: Ribonuclease PH (237 aa).

Phosphate is bound by residues Arg86 and 124–126 (GTR).

Belongs to the RNase PH family. As to quaternary structure, homohexameric ring arranged as a trimer of dimers.

The catalysed reaction is tRNA(n+1) + phosphate = tRNA(n) + a ribonucleoside 5'-diphosphate. Its function is as follows. Phosphorolytic 3'-5' exoribonuclease that plays an important role in tRNA 3'-end maturation. Removes nucleotide residues following the 3'-CCA terminus of tRNAs; can also add nucleotides to the ends of RNA molecules by using nucleoside diphosphates as substrates, but this may not be physiologically important. Probably plays a role in initiation of 16S rRNA degradation (leading to ribosome degradation) during starvation. This chain is Ribonuclease PH, found in Methylorubrum extorquens (strain CM4 / NCIMB 13688) (Methylobacterium extorquens).